The primary structure comprises 473 residues: Nuclear distribution protein PAC1 (473 aa).

In terms of domain architecture, LisH spans 9 to 41 (QAEELHKSIIAYFLSAKLPKSAAALREEIADSV). Residues 60-87 (TSVVRLQKKIMDLEARNSALQSELDSAT) are a coiled coil. A compositionally biased stretch (polar residues) spans 80–93 (QSELDSATPTSLSR). The interval 80–99 (QSELDSATPTSLSRRNQDPV) is disordered. 8 WD repeats span residues 113-154 (SHRN…RTIK), 156-196 (HTRA…KNIR), 200-247 (GHDH…CVRT), 250-289 (GHVE…TKST), 292-352 (GHEH…IKTL), 354-393 (GHDN…KCVR), 397-434 (DAHA…ALSG), and 435-472 (VNGI…RVFA).

It belongs to the WD repeat LIS1/nudF family. As to quaternary structure, self-associates. Interacts with NDL1 and dynein.

The protein localises to the cytoplasm. Its subcellular location is the cytoskeleton. It is found in the spindle pole. Positively regulates the activity of the minus-end directed microtubule motor protein dynein. May enhance dynein-mediated microtubule sliding by targeting dynein to the microtubule plus end. Required for nuclear migration during vegetative growth as well as development. Required for retrograde early endosome (EE) transport from the hyphal tip. Required for localization of dynein to the mitotic spindle poles. Recruits additional proteins to the dynein complex at SPBs. This chain is Nuclear distribution protein PAC1, found in Ajellomyces dermatitidis (strain ER-3 / ATCC MYA-2586) (Blastomyces dermatitidis).